A 438-amino-acid polypeptide reads, in one-letter code: DNA primase DnaG (438 aa).

A Toprim domain is found at D171 to E245. E177, D219, and D221 together coordinate Mg(2+).

The protein belongs to the archaeal DnaG primase family. As to quaternary structure, forms a ternary complex with MCM helicase and DNA. Component of the archaeal exosome complex. It depends on Mg(2+) as a cofactor.

The enzyme catalyses ssDNA + n NTP = ssDNA/pppN(pN)n-1 hybrid + (n-1) diphosphate.. In terms of biological role, RNA polymerase that catalyzes the synthesis of short RNA molecules used as primers for DNA polymerase during DNA replication. Also part of the exosome, which is a complex involved in RNA degradation. Acts as a poly(A)-binding protein that enhances the interaction between heteromeric, adenine-rich transcripts and the exosome. The sequence is that of DNA primase DnaG from Methanothrix thermoacetophila (strain DSM 6194 / JCM 14653 / NBRC 101360 / PT) (Methanosaeta thermophila).